Here is a 479-residue protein sequence, read N- to C-terminus: Lysosomal protective protein (479 aa).

Positions 1 to 27 are cleaved as a signal peptide; that stretch reads MFRAALWPPVLLLLQLLLLACAPGGEG. 4 cysteine pairs are disulfide-bonded: Cys-87/Cys-361, Cys-239/Cys-255, Cys-240/Cys-245, and Cys-280/Cys-330. An N-linked (GlcNAc...) asparagine glycan is attached at Asn-144. The active site involves Ser-177. Asn-332 carries N-linked (GlcNAc...) asparagine glycosylation. Active-site residues include Asp-399 and His-456.

It belongs to the peptidase S10 family. In terms of assembly, heterodimer of a 32 kDa chain and a 20 kDa chain; disulfide-linked.

The protein localises to the lysosome. The catalysed reaction is Release of a C-terminal amino acid with broad specificity.. Functionally, protective protein appears to be essential for both the activity of beta-galactosidase and neuraminidase, it associates with these enzymes and exerts a protective function necessary for their stability and activity. This protein is also a carboxypeptidase and can deamidate tachykinins. The protein is Lysosomal protective protein (CTSA) of Bos taurus (Bovine).